A 452-amino-acid chain; its full sequence is Keratin, type I cytoskeletal 15 (452 aa).

The segment at 1–97 (MATTFLQTSS…GGDGGLLSGN (97 aa)) is head. Residues Ser-15, Ser-16, Ser-28, Ser-33, and Ser-47 each carry the phosphoserine modification. Positions 98 to 133 (EKVTMQNLNDRLASYLDKVRALEQANTELEVKIRDW) are coil 1A. Residues 98–410 (EKVTMQNLND…NLLEGQDAKM (313 aa)) enclose the IF rod domain. A Phosphothreonine modification is found at Thr-124. The segment at 134–152 (YQKQSPASPDRDYSHYFKT) is linker 1. A coil 1B region spans residues 153-244 (MEEIRDKILA…KNHEEEMKEF (92 aa)). The segment at 245 to 264 (SSQLAGQVNVEMDAAPGVDL) is linker 12. A coil 2 region spans residues 265–406 (TRMLAEMREQ…ATYRNLLEGQ (142 aa)). Lys-293 is covalently cross-linked (Glycyl lysine isopeptide (Lys-Gly) (interchain with G-Cter in SUMO2)). Phosphothreonine is present on residues Thr-294 and Thr-316. A tail region spans residues 407–452 (DAKMAGIGVREGSSGGGGSSSSSSNFHISVEESVDGKVVSSRKREI). Residues 413 to 452 (IGVREGSSGGGGSSSSSSNFHISVEESVDGKVVSSRKREI) form a disordered region. A Glycyl lysine isopeptide (Lys-Gly) (interchain with G-Cter in SUMO1); alternate cross-link involves residue Lys-443. Lys-443 is covalently cross-linked (Glycyl lysine isopeptide (Lys-Gly) (interchain with G-Cter in SUMO2); alternate).

The protein belongs to the intermediate filament family. Heterotetramer of two type I and two type II keratins. Forms a heterodimer with KRT14. Interacts with PLEC isoform 1C, when in a heterodimer with KRT14. Interacts with NOD2. Expressed strongly in the basal cell layer at the tips of rete-like prominences (RLPs) of adult dorsal tongue, outer root sheath (ORS) of hair follicle and skin epidermis (at protein level).

Its function is as follows. In the absence of KRT14, makes a bona fide, but ultrastructurally distinct keratin filament network with KRT5. This is Keratin, type I cytoskeletal 15 (Krt15) from Mus musculus (Mouse).